The following is an 868-amino-acid chain: Paladin (868 aa).

G2 carries the N-myristoyl glycine lipid modification.

Belongs to the paladin family.

The protein resides in the cytoplasm. Its subcellular location is the cytosol. This chain is Paladin (PALD1), found in Gallus gallus (Chicken).